A 75-amino-acid chain; its full sequence is MAYRESFYRFLMTQRNPGSADDIAQFANNAQHDSSFPKQEEDYEKLSDYLELNAGYLPSMSVFDKAYQLYLDNMN.

Belongs to the UPF0346 family.

The protein is UPF0346 protein LGAS_0911 of Lactobacillus gasseri (strain ATCC 33323 / DSM 20243 / BCRC 14619 / CIP 102991 / JCM 1131 / KCTC 3163 / NCIMB 11718 / NCTC 13722 / AM63).